Reading from the N-terminus, the 226-residue chain is Neuron-specific vesicular protein calcyon (226 aa).

The tract at residues 1–21 (MVKLGCSFSGKPGKEAGDQDG) is disordered. Residues 1–88 (MVKLGCSFSG…EEGRRLPTAR (88 aa)) are Extracellular-facing. A helical membrane pass occupies residues 89–109 (MIAFAMALLGCVLIMYKAIWY). Over 110–226 (DQFTCPDGFL…AEGVPSQPPK (117 aa)) the chain is Cytoplasmic. The interval 177–226 (HKGTTPAAMAVSTAAAAAAAEGTEPSGKSLDTREKEDPQKAEGVPSQPPK) is disordered. Residues 183-196 (AAMAVSTAAAAAAA) are compositionally biased toward low complexity. A compositionally biased stretch (basic and acidic residues) spans 206-216 (LDTREKEDPQK).

Belongs to the NSG family. Interacts with CLTA. As to expression, most abundant in brain. Also expressed in testis and ovary and, at much lower levels, in kidney and heart.

It localises to the cytoplasmic vesicle membrane. The protein localises to the cell membrane. Interacts with clathrin light chain A and stimulates clathrin self-assembly and clathrin-mediated endocytosis. This is Neuron-specific vesicular protein calcyon (Caly) from Mus musculus (Mouse).